The following is a 147-amino-acid chain: MVEWTDDERAIINSIFSTLDYEEIGRKSLCRCLIVYPWTQRYFGGFGNLYNAETILCNPLIAAHGTKILHGLDRALKNMDDIKNTYAELSQLHSDKLHVDPDNFRLLADCLTVVIAAKMGTAFTVETQVAWQKFLAVVVSALGRQYH.

A Globin domain is found at 3-147; that stretch reads EWTDDERAII…VVSALGRQYH (145 aa). The heme b site is built by His64 and His93.

Belongs to the globin family. Heterotetramer of two alpha chains and two beta chains. In terms of tissue distribution, red blood cells.

Functionally, involved in oxygen transport from gills to the various peripheral tissues. The chain is Hemoglobin subunit beta (hbb) from Merlangius merlangus (Whiting).